The chain runs to 400 residues: Trans-enoyl reductase ucsL (400 aa).

50-53 (TDHK) contributes to the NADP(+) binding site. Substrate is bound at residue 145-152 (SVHGSVAL). NADP(+) is bound by residues 204-207 (STAC), 227-230 (SPRN), Tyr-245, and 292-293 (LE). 313 to 317 (GPVMF) serves as a coordination point for substrate. 389–390 (VS) serves as a coordination point for NADP(+).

Belongs to the zinc-containing alcohol dehydrogenase family. Monomer.

It participates in mycotoxin biosynthesis. Functionally, trans-enoyl reductase; part of the gene cluster that mediates the biosynthesis of UCS1025A, a member of the pyrrolizidinone family that acts as a strong telomerase inhibitor and displays potent antibacterial and antitumor properties. These compounds share a hemiaminal-containing pyrrolizidinone core fused with a gamma-lactone, giving a furopyrrolizidine that is connected to a decalin fragment. The polyketide synthase module (PKS) of the PKS-NRPS ucsA is responsible for the synthesis of the polyketide backbone via the condensation of an acetyl-CoA starter unit with 6 malonyl-CoA units. The downstream nonribosomal peptide synthetase (NRPS) module then amidates the carboxyl end of the polyketide with a 2S,3S-methylproline derived from L-isoleucine by the 2-oxoglutarate-dependent dioxygenase ucsF which converts L-isoleucine to (4S,5S)-4-methylpyrroline-5-carboxylate that is further converted to 2S,3S-methylproline by the pyrroline-5-carboxylate reductase ucsG. Reductive release of the completed aminoacyl polyketide from the assembly line can form the 3-pyrrolin-2-one structure via an intramolecular Knoevenagel reaction. Because ucsA lacks a designated enoylreductase (ER) domain, the required activity is provided the enoyl reductase ucsL. This keto acyclic precursor is the substrate of the Diels-Alderase ucsH, that catalyzes the Diels-Alder cycloaddition. Oxidation of the 3S-methyl group to a carboxylate by the cytochrome P450 monooxygenase ucsK allows an oxa-Michael cyclization that might involve the reductase/dehydrogenase ucsI and which furnishes the furopyrrolizidine. The oxidase ucsJ likely plays a critical role in stereoselective reduction of the C5-C6 double bond to afford the required R-configured carboxylate group. Further enolization and oxidation at C5 by an unidentified enzyme affords the last intermediate that can undergo oxa-Michael cyclization to yield UCS1025A. The chain is Trans-enoyl reductase ucsL from Acremonium sp.